We begin with the raw amino-acid sequence, 301 residues long: Ornithine carbamoyltransferase (301 aa).

Carbamoyl phosphate contacts are provided by residues arginine 100 and 127–130; that span reads HPCQ. L-ornithine-binding positions include asparagine 158, aspartate 221, and 225 to 226; that span reads SM. Carbamoyl phosphate contacts are provided by cysteine 260 and arginine 288.

Belongs to the aspartate/ornithine carbamoyltransferase superfamily. OTCase family.

The protein localises to the cytoplasm. It carries out the reaction carbamoyl phosphate + L-ornithine = L-citrulline + phosphate + H(+). Its pathway is amino-acid biosynthesis; L-arginine biosynthesis; L-arginine from L-ornithine and carbamoyl phosphate: step 1/3. Reversibly catalyzes the transfer of the carbamoyl group from carbamoyl phosphate (CP) to the N(epsilon) atom of ornithine (ORN) to produce L-citrulline. In Vibrio sp. (strain 2693), this protein is Ornithine carbamoyltransferase (argF).